The chain runs to 1076 residues: MESSIFKPSSMDLIRAGLQDLDKARALFDQLKADDIPDERCAELLSALAHACDPDMALSNFVDIVNAMQSSQRDLEHVIPDNDALKRLVTVLGVSDAMGKFMRFKPQLVEAAAVDNCNSHLFNHAQRRARLLKAVGADPDEPAMPVASKDLAEAATALRSSYRNQLAAIIAQDAVADDPASIQPTISRELSDLADAALEGALAIARHETEGSEHVRFTIIGMGKLGAQELNYVSDVDLIYVVEPADKDVDHQTLIRVGTKMGTMLQRVCQSAIMGVAEQPLWQIDGGLRPEGKDGALVRVLSSHKNYYEQWAENWEFQALLKARPVAGDPDLGRAYMDMTRPFVWSASKRKNFVYDCQKMRKRVEDLIPAPLKDREIKLGRGGLRDVEFTVQMLQLVHGRTDESLRTSNTLDSLQRLSEGGYVSRKQAVRMSQDYRFERVMEHRQQIWSLKRTHLFPDLGRASVGGLEKKRDIDVDELNQNQELRRLARAFGLHPEELVDKYDDTRREVRHLHLDIYYRPMLPVNAQMENDQIVLSVEAAQERFESIGFGDPDAAIRHVQALTAGVGRAAKINRIILPAVLQWLGEGQNPDMGLLNWRKLEENFGTESGYLGFLRDSTSAAQRLCHILSNSRFLGDALNKSVESISWLGDDDNLQARTREALDVQTGSALERFGSNINEFATSMRAMRRHEIERIGLSWMSGVISDSDSLKAMTDVYDAIIDASLTWAVRHQIAEFGVETAPAGITVIAMGRYGGREVNFSSDADAILIYRPADDADDGQANAFAKKVVEDLRNILQGPTTLEPKIELDLDLRPEGKNGPLVRSYASCEEYYESWASTWERQALLRARYAAGDAELARDFLINIADPLRYPTTELTEAELQNIRKLKARMEAERLPRGVRRERHLKLGKGGLSDVEWTVQLMQLQHAGDIKDLRVNGTLEALDVLEAKKLISAIDAIQLRKAWTLCTAARNGSYLWSGRANQADILPDDIYSLGGIAVYLGYGAHRGQHFENDLLAVMRKCRDVCQRLFYGKTEGEAAAATTATASAATQQPQTAPRPRMHVIAPRLERNRRRAQR.

The tract at residues 1–521 is adenylyl removase; it reads MESSIFKPSS…LHLDIYYRPM (521 aa). The adenylyl transferase stretch occupies residues 524–1076; it reads VNAQMENDQI…LERNRRRAQR (553 aa). The span at 1042–1056 shows a compositional bias: low complexity; it reads TATASAATQQPQTAP. Residues 1042–1076 form a disordered region; that stretch reads TATASAATQQPQTAPRPRMHVIAPRLERNRRRAQR.

It belongs to the GlnE family. It depends on Mg(2+) as a cofactor.

It catalyses the reaction [glutamine synthetase]-O(4)-(5'-adenylyl)-L-tyrosine + phosphate = [glutamine synthetase]-L-tyrosine + ADP. The catalysed reaction is [glutamine synthetase]-L-tyrosine + ATP = [glutamine synthetase]-O(4)-(5'-adenylyl)-L-tyrosine + diphosphate. Its function is as follows. Involved in the regulation of glutamine synthetase GlnA, a key enzyme in the process to assimilate ammonia. When cellular nitrogen levels are high, the C-terminal adenylyl transferase (AT) inactivates GlnA by covalent transfer of an adenylyl group from ATP to specific tyrosine residue of GlnA, thus reducing its activity. Conversely, when nitrogen levels are low, the N-terminal adenylyl removase (AR) activates GlnA by removing the adenylyl group by phosphorolysis, increasing its activity. The regulatory region of GlnE binds the signal transduction protein PII (GlnB) which indicates the nitrogen status of the cell. The protein is Bifunctional glutamine synthetase adenylyltransferase/adenylyl-removing enzyme of Bifidobacterium longum (strain NCC 2705).